The sequence spans 93 residues: DNA/RNA-binding protein Alba (93 aa).

Lys11 carries the N6-acetyllysine modification.

Belongs to the histone-like Alba family. Acetylated. Acetylation at Lys-11 decreases DNA-binding affinity.

Its subcellular location is the cytoplasm. The protein localises to the chromosome. Binds double-stranded DNA tightly but without sequence specificity. Involved in DNA compaction. The chain is DNA/RNA-binding protein Alba from Pyrococcus furiosus (strain ATCC 43587 / DSM 3638 / JCM 8422 / Vc1).